The following is a 257-amino-acid chain: UPF0246 protein YaaA (257 aa).

The protein belongs to the UPF0246 family.

The protein is UPF0246 protein YaaA of Salmonella choleraesuis (strain SC-B67).